Consider the following 458-residue polypeptide: MALWGGRFTQAADQRFKQFNDSLRFDYRLAEQDIVGSVAWSKALVTVGVLTADEQRQLEEALNVLLEEVRVNPQQILQSDAEDIHSWVEGKLIDKVGQLGKKLHTGRSRNDQVATDLKLWCKETVRELLTANRQLQSALVETAQANQDAVMPGYTHLQRAQPVTFAHWCLAYVEMLARDESRLQDTLKRLDVSPLGCGALAGTAYEIDREQLAGWLGFASATRNSLDSVSDRDHVLELLSDAAIGMVHLSRFAEDLIFFNSGEAGFVELSDRVTSGSSLMPQKKNPDALELIRGKCGRVQGALTGMMMTLKGLPLAYNKDMQEDKEGLFDALDTWLDCLHMAALVLDGIQVKRPRCQDAAQQGYANATELADYLVAKGVPFREAHHIVGEAVVEAIRQGKPLEALPLADLQKFSHVIGDDVYPMLSLQSCLDKRAAKGGVSPQQVAQAIDDARARLAL.

Belongs to the lyase 1 family. Argininosuccinate lyase subfamily.

The protein localises to the cytoplasm. The catalysed reaction is 2-(N(omega)-L-arginino)succinate = fumarate + L-arginine. It participates in amino-acid biosynthesis; L-arginine biosynthesis; L-arginine from L-ornithine and carbamoyl phosphate: step 3/3. This chain is Argininosuccinate lyase, found in Salmonella dublin (strain CT_02021853).